A 256-amino-acid polypeptide reads, in one-letter code: tRNA pseudouridine synthase A (256 aa).

Residue aspartate 52 is the Nucleophile of the active site. Residue tyrosine 110 coordinates substrate.

This sequence belongs to the tRNA pseudouridine synthase TruA family. In terms of assembly, homodimer.

The enzyme catalyses uridine(38/39/40) in tRNA = pseudouridine(38/39/40) in tRNA. Functionally, formation of pseudouridine at positions 38, 39 and 40 in the anticodon stem and loop of transfer RNAs. This is tRNA pseudouridine synthase A from Stenotrophomonas maltophilia (strain K279a).